Consider the following 1004-residue polypeptide: NACHT, LRR and PYD domains-containing protein 9C (1004 aa).

The 92-residue stretch at 1 to 92 (MVDSSSYGLL…TMAQIERRDK (92 aa)) folds into the Pyrin domain. The 323-residue stretch at 143–465 (ATAVVLGTRG…KQDKDTYHPV (323 aa)) folds into the NACHT domain. 149–156 (GTRGKGKT) serves as a coordination point for ATP. LRR repeat units follow at residues 750 to 770 (KVKHLSLVENPLKNKGVMFLC), 779 to 800 (VLESLMLSYCCLTFIACGHLYE), 807 to 828 (HLSLLDLGSNFLEDIGVNLLCE), 836 to 857 (TLKELWLPGCYLTSECCEEISA), and 864 to 884 (NLKTLKLGNNNIQDTGVKRLC).

The protein belongs to the NLRP family. In terms of tissue distribution, oocyte specific.

Its subcellular location is the cytoplasm. May be involved in inflammation. This Mus musculus (Mouse) protein is NACHT, LRR and PYD domains-containing protein 9C (Nlrp9c).